A 388-amino-acid polypeptide reads, in one-letter code: MRYLTAGESHGPSLTAIIEGIPAGLTLHPADIDHELQRRQGGYGRGARMSIETDQVQISSGVRHGKTTGAPITLTVINKDHQKWLDVMAVGDIEETLKLKRRVKHPRPGHADLVGGIKYHFNDLRDALERSSARETTMRVAVGAVAKRILAELGVDMLHHILIFGGITITIPSKLSFRELQERALHSELSIVNPKQEEEIKTYIDKIKKEGDTIGGIIETIVQGVPAGLGSYVQWDKKLDAKLAQAVLSINAFKGVEFGVGFDMGFQKGSQVMDEITWTPTQGYGRQTNHLGGFEGGMTTGQLLVVKGVMKPIPTLYKPLMSVDIDSHEPYKATVERSDPTALPAAGVIMENVVATVLAKEILETFSSTTMSELQKAFSDYRAYVKQF.

NADP(+) contacts are provided by Arg-39 and Arg-45. FMN-binding positions include 130–132 (RSS), 251–252 (NA), Gly-296, 311–315 (KPIPT), and Arg-337.

Belongs to the chorismate synthase family. Homotetramer. FMNH2 serves as cofactor.

The enzyme catalyses 5-O-(1-carboxyvinyl)-3-phosphoshikimate = chorismate + phosphate. It functions in the pathway metabolic intermediate biosynthesis; chorismate biosynthesis; chorismate from D-erythrose 4-phosphate and phosphoenolpyruvate: step 7/7. Its function is as follows. Catalyzes the anti-1,4-elimination of the C-3 phosphate and the C-6 proR hydrogen from 5-enolpyruvylshikimate-3-phosphate (EPSP) to yield chorismate, which is the branch point compound that serves as the starting substrate for the three terminal pathways of aromatic amino acid biosynthesis. This reaction introduces a second double bond into the aromatic ring system. The sequence is that of Chorismate synthase from Streptococcus pyogenes serotype M2 (strain MGAS10270).